The primary structure comprises 421 residues: AP-3 complex subunit mu (421 aa).

In terms of domain architecture, MHD spans 178 to 420 (QNKIFFDIIE…TTKAGKFQVR (243 aa)).

Belongs to the adaptor complexes medium subunit family. In terms of assembly, adaptor protein complex 3 (AP-3) is a heterotetramer composed of two large adaptins (delta-type subunit and beta-type subunit), a medium adaptin (mu-type subunit) and a small adaptin (sigma-type subunit).

It is found in the endosome membrane. Part of the AP-3 complex, an adaptor-related complex which is essential for the compartmentalization of the endocytic pathway. The sequence is that of AP-3 complex subunit mu (apm3) from Dictyostelium discoideum (Social amoeba).